Here is a 101-residue protein sequence, read N- to C-terminus: Small ribosomal subunit protein bS18c (101 aa).

Basic residues predominate over residues 1–19 (MDKSKQPFRKSKRSFRRRL). Residues 1 to 26 (MDKSKQPFRKSKRSFRRRLPPIGSGD) form a disordered region.

The protein belongs to the bacterial ribosomal protein bS18 family. In terms of assembly, part of the 30S ribosomal subunit.

The protein localises to the plastid. It localises to the chloroplast. This is Small ribosomal subunit protein bS18c from Phalaenopsis aphrodite subsp. formosana (Moth orchid).